Here is a 205-residue protein sequence, read N- to C-terminus: Protease (205 aa).

Residues histidine 55, aspartate 72, and cysteine 122 contribute to the active site.

It belongs to the peptidase C5 family. Interacts with protease cofactor pVI-C; this interaction is necessary for protease activation.

It is found in the virion. The protein localises to the host nucleus. It catalyses the reaction Cleaves proteins of the adenovirus and its host cell at two consensus sites: -Yaa-Xaa-Gly-Gly-|-Xaa- and -Yaa-Xaa-Gly-Xaa-|-Gly- (in which Yaa is Met, Ile or Leu, and Xaa is any amino acid).. With respect to regulation, requires DNA and protease cofactor for maximal activation. Inside nascent virions, becomes partially activated by binding to the viral DNA, allowing it to cleave the cofactor that binds to the protease and fully activates it. Actin, like the viral protease cofactor, seems to act as a cofactor in the cleavage of cytokeratin 18 and of actin itself. Its function is as follows. Cleaves viral precursor proteins (pTP, pIIIa, pVI, pVII, pVIII, and pX) inside newly assembled particles giving rise to mature virions. Protease complexed to its cofactor slides along the viral DNA to specifically locate and cleave the viral precursors. Mature virions have a weakened organization compared to the unmature virions, thereby facilitating subsequent uncoating. Without maturation, the particle lacks infectivity and is unable to uncoat. Late in adenovirus infection, in the cytoplasm, may participate in the cytoskeleton destruction. Cleaves host cell cytoskeletal keratins K7 and K18. The protein is Protease of Galliformes (FAdV-8).